A 198-amino-acid chain; its full sequence is Iron-sulfur flavoprotein MJ0731 (198 aa).

The [4Fe-4S] cluster site is built by C46, C49, C52, and C59.

This sequence belongs to the SsuE family. Isf subfamily. In terms of assembly, homodimer. FMN serves as cofactor. The cofactor is [4Fe-4S] cluster.

Functionally, redox-active protein probably involved in electron transport. This is Iron-sulfur flavoprotein MJ0731 from Methanocaldococcus jannaschii (strain ATCC 43067 / DSM 2661 / JAL-1 / JCM 10045 / NBRC 100440) (Methanococcus jannaschii).